Consider the following 154-residue polypeptide: Methylglyoxal synthase (154 aa).

An MGS-like domain is found at methionine 1–lysine 154. Substrate-binding positions include histidine 19, lysine 23, threonine 45 to threonine 48, and serine 65 to glycine 66. Aspartate 71 acts as the Proton donor/acceptor in catalysis. Histidine 98 is a substrate binding site.

Belongs to the methylglyoxal synthase family.

It carries out the reaction dihydroxyacetone phosphate = methylglyoxal + phosphate. Its function is as follows. Catalyzes the formation of methylglyoxal from dihydroxyacetone phosphate. This chain is Methylglyoxal synthase, found in Yersinia pseudotuberculosis serotype O:1b (strain IP 31758).